We begin with the raw amino-acid sequence, 144 residues long: Small ribosomal subunit protein eS19A (144 aa).

Positions 83-102 are disordered; it reads VNRGMRPSHHRDGSGSVQRK.

It belongs to the eukaryotic ribosomal protein eS19 family. Component of the small ribosomal subunit (SSU). Mature yeast ribosomes consist of a small (40S) and a large (60S) subunit. The 40S small subunit contains 1 molecule of ribosomal RNA (18S rRNA) and at least 33 different proteins. The large 60S subunit contains 3 rRNA molecules (25S, 5.8S and 5S rRNA) and at least 46 different proteins.

The protein localises to the cytoplasm. The protein resides in the nucleus. It localises to the nucleolus. Component of the ribosome, a large ribonucleoprotein complex responsible for the synthesis of proteins in the cell. The small ribosomal subunit (SSU) binds messenger RNAs (mRNAs) and translates the encoded message by selecting cognate aminoacyl-transfer RNA (tRNA) molecules. The large subunit (LSU) contains the ribosomal catalytic site termed the peptidyl transferase center (PTC), which catalyzes the formation of peptide bonds, thereby polymerizing the amino acids delivered by tRNAs into a polypeptide chain. The nascent polypeptides leave the ribosome through a tunnel in the LSU and interact with protein factors that function in enzymatic processing, targeting, and the membrane insertion of nascent chains at the exit of the ribosomal tunnel. eS19 is required for proper maturation of the small (40S) ribosomal subunit. Binds to 40S pre-ribosomal particles, probably required after association of NOC4 but before association of ENP1, TSR1 and RIO2 with 20/21S pre-rRNA. This chain is Small ribosomal subunit protein eS19A (rps1901), found in Schizosaccharomyces pombe (strain 972 / ATCC 24843) (Fission yeast).